We begin with the raw amino-acid sequence, 339 residues long: GDP-fucose transporter 1 (339 aa).

8 consecutive transmembrane segments (helical) span residues 9-29, 45-65, 82-102, 111-133, 136-156, 165-185, 209-229, and 237-257; these read SVRIAAVVAAYWTISISLVFL, LFVTWYQCVVTVICLFFLSLL, LSVAKQVLPLSAVFVGMITFN, VSFYNVGRSLTTVFNVICTYVIL, STSYKAVICCAVIIGGFLMGV, ISYSGVLFGVLASLCVSLNAI, ACFLFLPLMALLGEIGEVAHF, and FWLMMTIGGVFGIAIGYITGL. The segment at 319–339 is disordered; the sequence is AHTIQASKDDKALQEDGQTKV. The segment covering 325 to 339 has biased composition (basic and acidic residues); that stretch reads SKDDKALQEDGQTKV.

The protein belongs to the TPT transporter family. SLC35C subfamily.

The protein localises to the golgi apparatus membrane. It catalyses the reaction GMP(out) + GDP-beta-L-fucose(in) = GMP(in) + GDP-beta-L-fucose(out). Antiporter specific for GDP-l-fucose and depending on the concomitant reverse transport of GMP. Involved in GDP-fucose import from the cytoplasm into the Golgi lumen. The protein is GDP-fucose transporter 1 (slc35c1) of Nematostella vectensis (Starlet sea anemone).